Here is a 238-residue protein sequence, read N- to C-terminus: NAD(P)H-hydrate epimerase (238 aa).

The 216-residue stretch at 10–225 (AIKVDQILFN…ALQRQYELNL (216 aa)) folds into the YjeF N-terminal domain. 68–72 (NNGGD) provides a ligand contact to (6S)-NADPHX. K(+)-binding residues include asparagine 69 and aspartate 133. (6S)-NADPHX-binding positions include 137–143 (GFSFKPP) and aspartate 166. Serine 169 is a binding site for K(+).

It belongs to the NnrE/AIBP family. K(+) is required as a cofactor.

It catalyses the reaction (6R)-NADHX = (6S)-NADHX. It carries out the reaction (6R)-NADPHX = (6S)-NADPHX. Its function is as follows. Catalyzes the epimerization of the S- and R-forms of NAD(P)HX, a damaged form of NAD(P)H that is a result of enzymatic or heat-dependent hydration. This is a prerequisite for the S-specific NAD(P)H-hydrate dehydratase to allow the repair of both epimers of NAD(P)HX. This Drosophila willistoni (Fruit fly) protein is NAD(P)H-hydrate epimerase.